Here is a 396-residue protein sequence, read N- to C-terminus: Dual specificity mitogen-activated protein kinase kinase dSOR1 (396 aa).

The disordered stretch occupies residues 25-44 (APTPPFKTPSGTDTHSLLGK). The Protein kinase domain maps to 87 to 364 (LEKLGELGSG…LKTLLSHPWI (278 aa)). ATP is bound by residues 93-101 (LGSGNGGVV) and Lys116. Asp209 (proton acceptor) is an active-site residue. Residues Ser237 and Ser241 each carry the phosphoserine; by RAF modification.

This sequence belongs to the protein kinase superfamily. STE Ser/Thr protein kinase family. MAP kinase kinase subfamily. As to quaternary structure, interacts with Raf and ksr; Dsor1 binding to ksr probably promotes ksr and Raf dimerization and ksr-mediated Raf transactivation. Post-translationally, phosphorylation on Ser/Thr by MAP kinase kinase kinases regulates positively the kinase activity.

The catalysed reaction is L-seryl-[protein] + ATP = O-phospho-L-seryl-[protein] + ADP + H(+). It carries out the reaction L-threonyl-[protein] + ATP = O-phospho-L-threonyl-[protein] + ADP + H(+). It catalyses the reaction L-tyrosyl-[protein] + ATP = O-phospho-L-tyrosyl-[protein] + ADP + H(+). Functionally, required downstream of Raf in the sevenless (sev), torso (tor), and Drosophila EGF receptor homolog (DER) signal transduction pathways. Involved in both positive regulation (at the posterior terminus) and negative regulation (at the anterior domain) of tll, as in other terminal class gene products, maybe via the ERK-A kinase. This Drosophila melanogaster (Fruit fly) protein is Dual specificity mitogen-activated protein kinase kinase dSOR1 (Dsor1).